We begin with the raw amino-acid sequence, 497 residues long: 3-octaprenyl-4-hydroxybenzoate carboxy-lyase (497 aa).

Asn-175 provides a ligand contact to Mn(2+). Prenylated FMN is bound by residues 178–180 (IYR), 192–194 (RWL), and 197–198 (RG). Glu-241 contacts Mn(2+). Catalysis depends on Asp-290, which acts as the Proton donor.

Belongs to the UbiD family. Homohexamer. Prenylated FMN serves as cofactor. The cofactor is Mn(2+).

The protein resides in the cell membrane. The enzyme catalyses a 4-hydroxy-3-(all-trans-polyprenyl)benzoate + H(+) = a 2-(all-trans-polyprenyl)phenol + CO2. Its pathway is cofactor biosynthesis; ubiquinone biosynthesis. In terms of biological role, catalyzes the decarboxylation of 3-octaprenyl-4-hydroxy benzoate to 2-octaprenylphenol, an intermediate step in ubiquinone biosynthesis. In Shigella dysenteriae serotype 1 (strain Sd197), this protein is 3-octaprenyl-4-hydroxybenzoate carboxy-lyase.